The chain runs to 176 residues: Large ribosomal subunit protein bL28m (176 aa).

Residues 1-8 (MASKLLRK) constitute a mitochondrion transit peptide.

This sequence belongs to the bacterial ribosomal protein bL28 family. In terms of assembly, component of the mitochondrial large ribosomal subunit (mt-LSU). Mature yeast 74S mitochondrial ribosomes consist of a small (37S) and a large (54S) subunit. The 37S small subunit contains a 15S ribosomal RNA (15S mt-rRNA) and at least 32 different proteins. The 54S large subunit contains a 21S rRNA (21S mt-rRNA) and at least 45 different proteins.

It localises to the cytoplasm. It is found in the mitochondrion. Component of the mitochondrial ribosome (mitoribosome), a dedicated translation machinery responsible for the synthesis of mitochondrial genome-encoded proteins, including at least some of the essential transmembrane subunits of the mitochondrial respiratory chain. The mitoribosomes are attached to the mitochondrial inner membrane and translation products are cotranslationally integrated into the membrane. In Schizosaccharomyces pombe (strain 972 / ATCC 24843) (Fission yeast), this protein is Large ribosomal subunit protein bL28m (mrpl24).